A 127-amino-acid polypeptide reads, in one-letter code: 3-aminoacrylate deaminase RutC (127 aa).

This sequence belongs to the RutC family.

It catalyses the reaction (Z)-3-aminoacrylate + H2O + H(+) = 3-oxopropanoate + NH4(+). Its function is as follows. Involved in pyrimidine catabolism. Catalyzes the deamination of 3-aminoacrylate to malonic semialdehyde, a reaction that can also occur spontaneously. RutC may facilitate the reaction and modulate the metabolic fitness, rather than catalyzing essential functions. The chain is 3-aminoacrylate deaminase RutC from Pseudomonas syringae pv. syringae (strain B728a).